Reading from the N-terminus, the 498-residue chain is ATP synthase subunit beta, chloroplastic (498 aa).

Position 172-179 (172-179) interacts with ATP; it reads GGAGVGKT.

The protein belongs to the ATPase alpha/beta chains family. F-type ATPases have 2 components, CF(1) - the catalytic core - and CF(0) - the membrane proton channel. CF(1) has five subunits: alpha(3), beta(3), gamma(1), delta(1), epsilon(1). CF(0) has four main subunits: a(1), b(1), b'(1) and c(9-12).

The protein resides in the plastid. It is found in the chloroplast thylakoid membrane. The enzyme catalyses ATP + H2O + 4 H(+)(in) = ADP + phosphate + 5 H(+)(out). Produces ATP from ADP in the presence of a proton gradient across the membrane. The catalytic sites are hosted primarily by the beta subunits. In Beta vulgaris (Sugar beet), this protein is ATP synthase subunit beta, chloroplastic.